Consider the following 325-residue polypeptide: DNA-directed RNA polymerase subunit alpha (325 aa).

An alpha N-terminal domain (alpha-NTD) region spans residues 1–239; it reads MQQFLRYNIN…DHLKPLIDIN (239 aa). Residues 255-325 form an alpha C-terminal domain (alpha-CTD) region; sequence EKNKKLSIPI…ELYDLKLKNN (71 aa).

The protein belongs to the RNA polymerase alpha chain family. Homodimer. The RNAP catalytic core consists of 2 alpha, 1 beta, 1 beta' and 1 omega subunit. When a sigma factor is associated with the core the holoenzyme is formed, which can initiate transcription.

It catalyses the reaction RNA(n) + a ribonucleoside 5'-triphosphate = RNA(n+1) + diphosphate. In terms of biological role, DNA-dependent RNA polymerase catalyzes the transcription of DNA into RNA using the four ribonucleoside triphosphates as substrates. This chain is DNA-directed RNA polymerase subunit alpha, found in Mycoplasmoides gallisepticum (strain R(low / passage 15 / clone 2)) (Mycoplasma gallisepticum).